The following is a 561-amino-acid chain: Excitatory amino acid transporter 4 (561 aa).

The Cytoplasmic segment spans residues 1–52 (MSSHGNSLFLRESGAGGGCLQGLQDSLQQRALRTRLRLQTMTREHVRRFLRR). At serine 2 the chain carries Phosphoserine. The next 3 helical transmembrane spans lie at 53-73 (NAFI…AFAL), 96-116 (MLQM…MASL), and 130-150 (VYYM…VTII). N-linked (GlcNAc...) asparagine glycosylation is found at asparagine 213, asparagine 229, and asparagine 236. A run of 3 helical transmembrane segments spans residues 259–282 (SANG…IGGM), 292–319 (FFDS…LFLI), and 341–362 (LTVI…YFLV). An intramembrane region (discontinuously helical) is located at residues 368 to 398 (FPFIGGMLQALITAMGTSSSSATLPITFRCL). 385–387 (SSS) contributes to the L-aspartate binding site. Residues 408 to 434 (ITRFVLPVGATVNMDGTALYEALAAIF) form a helical membrane-spanning segment. Na(+) is bound by residues glycine 416, threonine 418, and asparagine 420. L-aspartate is bound by residues threonine 424, 465–469 (IPQAG), aspartate 498, and asparagine 505. Residues 448-481 (ITTISITATAASVGAAGIPQAGLVTMVIVLTSVG) constitute an intramembrane region (discontinuously helical). Residues 495-516 (WFLDRLRTMTNVLGDSIGAAVI) form a helical membrane-spanning segment. 2 residues coordinate Na(+): asparagine 505 and aspartate 509.

Belongs to the dicarboxylate/amino acid:cation symporter (DAACS) (TC 2.A.23) family. SLC1A6 subfamily. Homotrimer. In terms of tissue distribution, brain specific.

It localises to the cell membrane. The enzyme catalyses K(+)(in) + L-glutamate(out) + 3 Na(+)(out) + H(+)(out) = K(+)(out) + L-glutamate(in) + 3 Na(+)(in) + H(+)(in). It carries out the reaction K(+)(in) + L-aspartate(out) + 3 Na(+)(out) + H(+)(out) = K(+)(out) + L-aspartate(in) + 3 Na(+)(in) + H(+)(in). The catalysed reaction is D-aspartate(out) + K(+)(in) + 3 Na(+)(out) + H(+)(out) = D-aspartate(in) + K(+)(out) + 3 Na(+)(in) + H(+)(in). In terms of biological role, sodium-dependent, high-affinity amino acid transporter that mediates the uptake of L-glutamate and also L-aspartate and D-aspartate. Functions as a symporter that transports one amino acid molecule together with two or three Na(+) ions and one proton, in parallel with the counter-transport of one K(+) ion. Mediates Cl(-) flux that is not coupled to amino acid transport; this avoids the accumulation of negative charges due to aspartate and Na(+) symport. Plays a redundant role in the rapid removal of released glutamate from the synaptic cleft, which is essential for terminating the postsynaptic action of glutamate. In Mus musculus (Mouse), this protein is Excitatory amino acid transporter 4 (Slc1a6).